Here is a 208-residue protein sequence, read N- to C-terminus: Peptidyl-prolyl cis-trans isomerase FKBP13, chloroplastic (208 aa).

2 cysteine pairs are disulfide-bonded: Cys-84-Cys-96 and Cys-185-Cys-190. The PPIase FKBP-type domain maps to 109–208 (GQLIKAHYVG…LFDIEYIGKA (100 aa)).

It belongs to the FKBP-type PPIase family. Interacts in vitro with LTO1. The precursor, but not the mature form of the protein, interacts with the Rieske protein. As to expression, expressed in stems, leaves and developing flower buds, but not in roots.

It localises to the plastid. The protein resides in the chloroplast thylakoid lumen. The enzyme catalyses [protein]-peptidylproline (omega=180) = [protein]-peptidylproline (omega=0). With respect to regulation, PPIase activity is optimal in oxidized form (S-S) and minimal in reduced form (SH). Reduction of the oxidized form is mediated by thioredoxin (TRX-M). Its function is as follows. PPIases accelerate the folding of proteins. It catalyzes the cis-trans isomerization of proline imidic peptide bonds in oligopeptides. Responsive of the major PPIase activity in the chloroplast thylakoid lumen. Regulates the accumulation of Rieske protein, an essential component of the photosynthetic electron transport chain. This is Peptidyl-prolyl cis-trans isomerase FKBP13, chloroplastic from Arabidopsis thaliana (Mouse-ear cress).